The following is a 751-amino-acid chain: Semaphorin-3C (751 aa).

The first 21 residues, 1–21 (MAFRTICVLVGVFICSICVKG), serve as a signal peptide directing secretion. Positions 28–511 (RVYLTFDELR…SNEGVSQVSL (484 aa)) constitute a Sema domain. Residue asparagine 81 is glycosylated (N-linked (GlcNAc...) asparagine). A disulfide bridge links cysteine 101 with cysteine 112. Residue asparagine 123 is glycosylated (N-linked (GlcNAc...) asparagine). A disulfide bridge connects residues cysteine 130 and cysteine 139. N-linked (GlcNAc...) asparagine glycosylation is found at asparagine 252 and asparagine 268. 2 cysteine pairs are disulfide-bonded: cysteine 266/cysteine 378 and cysteine 290/cysteine 338. Asparagine 465 is a glycosylation site (N-linked (GlcNAc...) asparagine). A disulfide bridge connects residues cysteine 514 and cysteine 532. In terms of domain architecture, Ig-like C2-type spans 571–655 (AYRNAAEIVQ…TENSFKQTIA (85 aa)). Asparagine 585 and asparagine 586 each carry an N-linked (GlcNAc...) asparagine glycan. A disulfide bond links cysteine 592 and cysteine 643. The span at 712–731 (TRQQHQQGDESQKMRGDYGK) shows a compositional bias: basic and acidic residues. The disordered stretch occupies residues 712-751 (TRQQHQQGDESQKMRGDYGKLKALINSRKSRNRRNQLPES).

It belongs to the semaphorin family. Interacts with PLXND1.

The protein localises to the secreted. Binds to plexin family members and plays an important role in the regulation of developmental processes. Required for normal cardiovascular development during embryogenesis. Functions as attractant for growing axons, and thereby plays an important role in axon growth and axon guidance. The protein is Semaphorin-3C (SEMA3C) of Pongo abelii (Sumatran orangutan).